A 414-amino-acid chain; its full sequence is Glyco-Gag protein (414 aa).

Topologically, residues 1-51 are cytoplasmic; it reads MSGASSGTAIGAHLFGVSPECRVLIGDEGAGPSKSLSEVSFSVWYQSRAAR. Residues 52 to 72 form a helical membrane-spanning segment; it reads LVIFCLVASFLVPCLTFLIAE. Topologically, residues 73-414 are extracellular; it reads TVMGQTIATP…TNLAQVKQVV (342 aa). Asn134 carries N-linked (GlcNAc...) asparagine; by host glycosylation. Residues 171-282 are disordered; it reads VRPFLPPPKP…LREGPNNRPQ (112 aa). Residues 174 to 193 show a composition bias toward pro residues; that stretch reads FLPPPKPPTPLPQPLSPQPS. The span at 194 to 206 shows a compositional bias: low complexity; it reads APLTSSLYPVLPK. Over residues 210–220 the composition is skewed to pro residues; sequence PKPPVLPPDPS.

In terms of processing, glycosylated by host. Cleaved by host near the middle of the molecule, releasing the c-terminal half containing capsid and nucleoprotein domains op GAG.

Its subcellular location is the host cell membrane. Functionally, plays a role in viral particle release. Presumably acts by facilitating the fission of the virion bud at the cell surface. The protein is Glyco-Gag protein of Felidae (cat family).